A 408-amino-acid polypeptide reads, in one-letter code: Tripartite motif containing 13 (408 aa).

Residues 10-58 (CPICCSLFDDPRVLPCSHNFCKKCLDGVLEENSRTMQWRPSSFKCPTCR) form an RING-type zinc finger. A B box-type zinc finger spans residues 89–131 (PKMPVCKEHSDQPLNIFCSTDLKLICGSCATTGEHKKHVFSSI). Cysteine 94, histidine 97, cysteine 117, and histidine 123 together coordinate Zn(2+). The helical transmembrane segment at 322-342 (ILVVACLILLLVTFLCAYPFI) threads the bilayer.

It localises to the endoplasmic reticulum membrane. It functions in the pathway protein modification; protein ubiquitination. E3 ubiquitin ligase involved in the retrotranslocation and turnover of membrane and secretory proteins from the ER through a set of processes named ER-associated degradation (ERAD). This process acts on misfolded proteins as well as in the regulated degradation of correctly folded proteins. The protein is Tripartite motif containing 13 (trim13) of Xenopus tropicalis (Western clawed frog).